An 81-amino-acid chain; its full sequence is Small cysteine-rich protein 1 2 (81 aa).

A signal peptide spans 1–19; the sequence is MGVNFNICLLLLLVATISS. The propeptide occupies 20–39; sequence QPLKATEKDDSTDENPFGIY.

Belongs to the Cnidaria small cysteine-rich protein (SCRiP) family. alpha subfamily. The basic myotoxic domain of rattlesnake crotamine toxins (with 6 Cys residues) has been detected in this protein. However, this protein contains 2 additional Cys at the C-terminal region. Hence, this protein may contain 4 disulfide bonds instead of the 3 suggested by the myotoxin domain.

Its subcellular location is the secreted. It is found in the nematocyst. Its function is as follows. Induces neurotoxic symptoms on zebrafish. Has also been claimed to be implied in calcification, but tests on homolog proteins suggest that proteins of this family have a neurotoxic function and not a calcification function. This is Small cysteine-rich protein 1 2 from Montipora capitata (Rice coral).